We begin with the raw amino-acid sequence, 329 residues long: GTP 3',8-cyclase (329 aa).

Residues 8–234 (AFARKFYYLR…QLRQRSDGPA (227 aa)) form the Radical SAM core domain. R17 contributes to the GTP binding site. Positions 24 and 28 each coordinate [4Fe-4S] cluster. Y30 is a binding site for S-adenosyl-L-methionine. C31 provides a ligand contact to [4Fe-4S] cluster. A GTP-binding site is contributed by R68. G72 lines the S-adenosyl-L-methionine pocket. GTP is bound at residue T99. S123 is a binding site for S-adenosyl-L-methionine. Position 160 (K160) interacts with GTP. M194 contacts S-adenosyl-L-methionine. Positions 257 and 260 each coordinate [4Fe-4S] cluster. 262 to 264 (RLR) is a binding site for GTP. [4Fe-4S] cluster is bound at residue C274.

Belongs to the radical SAM superfamily. MoaA family. In terms of assembly, monomer and homodimer. Requires [4Fe-4S] cluster as cofactor.

The catalysed reaction is GTP + AH2 + S-adenosyl-L-methionine = (8S)-3',8-cyclo-7,8-dihydroguanosine 5'-triphosphate + 5'-deoxyadenosine + L-methionine + A + H(+). Its pathway is cofactor biosynthesis; molybdopterin biosynthesis. In terms of biological role, catalyzes the cyclization of GTP to (8S)-3',8-cyclo-7,8-dihydroguanosine 5'-triphosphate. The polypeptide is GTP 3',8-cyclase (Salmonella dublin (strain CT_02021853)).